The sequence spans 1187 residues: RNA helicase Mov10l1 (1187 aa).

Positions 273 to 347 are disordered; it reads RSKSCPGAAA…EPEPGGLIPP (75 aa). 2 stretches are compositionally biased toward basic and acidic residues: residues 296–307 and 322–339; these read HHREDKTDEIPE and ACKEESREKGNTPEKQEP. 5 consecutive repeat copies span residues 642-652, 653-663, 664-674, 675-685, and 686-696. Positions 642-696 are 5 X 11 AA tandem repeats of [TI]-R-N-[DN]-[GS]-Q-[SP]-I-T-[NK]-[IVN]; sequence TRNDSQSITNIIRNDGQSITNVTRNDGQPITKVTRNNSQSITNITRNDGQPITKN. Residues 686 to 727 form a disordered region; sequence TRNDGQPITKNKKTVKDQTKHTTEERHVGTTDQPEKASSTAE. Over residues 699–720 the composition is skewed to basic and acidic residues; the sequence is TVKDQTKHTTEERHVGTTDQPE. 772–779 provides a ligand contact to ATP; it reads GPPGTGKT. Residues 888–891 carry the DEAG box motif; sequence DEAG.

Belongs to the DNA2/NAM7 helicase family. SDE3 subfamily. Interacts with PIWIL1. Interacts with PIWIL2. Interacts with PIWIL4. Interacts with HSPA2. Interacts with PLD6. Isoform 1: Specifically expressed in testis. Isoform 1: In testis, present in pachytene spermatocytes but absent in postmeiotic spermatids (at protein level). Isoform 2: Present in cardiomyocytes (at protein level). Isoform 2: Heart specific. Isoform 3: Heart specific and is specifically expressed in cardiac myocytes.

The protein resides in the cytoplasm. It carries out the reaction ATP + H2O = ADP + phosphate + H(+). Its function is as follows. ATP-dependent RNA helicase required during spermatogenesis to repress transposable elements and prevent their mobilization, which is essential for germline integrity. Acts via the piRNA metabolic process, which mediates the repression of transposable elements during meiosis by forming complexes composed of piRNAs and Piwi proteins and governs the methylation and subsequent repression of transposons. Involved in the primary piRNA metabolic process. Specifically binds to piRNA precursors and promotes the generation of intermediate piRNA processing fragments that are subsequently loaded to Piwi proteins. Acts via its ATP-dependent RNA helicase activity: displays 5'-3' RNA unwinding activity and probably mediates unwinding and funneling of single-stranded piRNA precursor transcripts to the endonuclease that catalyzes the first cleavage step of piRNA processing to generate piRNA intermediate fragments that are subsequently loaded to Piwi proteins. May act downstream of MEF2C during heart formation. Acts as a cardiac-specific suppressor of cardiomyocyte hypertrophy and cell cycle progression, suggesting that it may suppress these processes through the regulation of CDKN1A. Such results however require additional evidence. In Mus musculus (Mouse), this protein is RNA helicase Mov10l1.